We begin with the raw amino-acid sequence, 412 residues long: Nuclear hormone receptor family member nhr-61 (412 aa).

A compositionally biased stretch (low complexity) spans 1–19; that stretch reads MIVDSISSSTASTSSSSPT. The tract at residues 1-23 is disordered; that stretch reads MIVDSISSSTASTSSSSPTRGTP. A DNA-binding region (nuclear receptor) is located at residues 27 to 102; it reads SLQCAVCGDV…VGMNPRAVQG (76 aa). 2 NR C4-type zinc fingers span residues 30-50 and 66-90; these read CAVCGDVALGKHYGVNACNGC and CRHGGKCLVAKEQRNACRSCRLTRC. Residues 144-407 enclose the NR LBD domain; it reads KKEQIIDNLR…DWSQELRDHR (264 aa).

This sequence belongs to the nuclear hormone receptor family.

Its subcellular location is the nucleus. In terms of biological role, orphan nuclear receptor. In Caenorhabditis elegans, this protein is Nuclear hormone receptor family member nhr-61 (nhr-61).